The chain runs to 140 residues: Histone H2B (140 aa).

The interval 1 to 47 is disordered; it reads MPPKAQKTPTTGGKAPAGKAPVEKKEAGKKTAAPSGEKKKRTKTRKE. K7 is subject to N6-acetyllysine; alternate. K7 is covalently cross-linked (Glycyl lysine isopeptide (Lys-Gly) (interchain with G-Cter in SUMO); alternate). Position 14 is an N6-acetyllysine (K14). Position 24 is an N6-acetyllysine; alternate (K24). K24 is covalently cross-linked (Glycyl lysine isopeptide (Lys-Gly) (interchain with G-Cter in SUMO); alternate). Residue K25 forms a Glycyl lysine isopeptide (Lys-Gly) (interchain with G-Cter in SUMO) linkage. K134 is covalently cross-linked (Glycyl lysine isopeptide (Lys-Gly) (interchain with G-Cter in ubiquitin)).

This sequence belongs to the histone H2B family. The nucleosome is a histone octamer containing two molecules each of H2A, H2B, H3 and H4 assembled in one H3-H4 heterotetramer and two H2A-H2B heterodimers. The octamer wraps approximately 147 bp of DNA. Monoubiquitinated by BRE1 to form H2BK123ub1. H2BK123ub1 gives a specific tag for epigenetic transcriptional activation and is also prerequisite for H3K4me and H3K79me formation. H2BK123ub1 also modulates the formation of double-strand breaks during meiosis and is a prerequisite for DNA-damage checkpoint activation. In terms of processing, acetylated by GCN5 to form H2BK11ac and H2BK16ac. H2BK16ac can also be formed by ESA1. Acetylation of N-terminal lysines and particularly formation of H2BK11acK16ac has a positive effect on transcription. Post-translationally, sumoylation to form H2BK6su and probably also H2BK16su or H2BK17su, occurs preferentially near the telomeres and represses gene transcription.

The protein resides in the nucleus. It is found in the chromosome. Its function is as follows. Core component of nucleosome. Nucleosomes wrap and compact DNA into chromatin, limiting DNA accessibility to the cellular machineries which require DNA as a template. Histones thereby play a central role in transcription regulation, DNA repair, DNA replication and chromosomal stability. DNA accessibility is regulated via a complex set of post-translational modifications of histones, also called histone code, and nucleosome remodeling. This chain is Histone H2B (HTB1), found in Phaeosphaeria nodorum (strain SN15 / ATCC MYA-4574 / FGSC 10173) (Glume blotch fungus).